Here is a 305-residue protein sequence, read N- to C-terminus: Methionyl-tRNA formyltransferase (305 aa).

Residue 111–114 participates in (6S)-5,6,7,8-tetrahydrofolate binding; it reads SLLP.

Belongs to the Fmt family.

It catalyses the reaction L-methionyl-tRNA(fMet) + (6R)-10-formyltetrahydrofolate = N-formyl-L-methionyl-tRNA(fMet) + (6S)-5,6,7,8-tetrahydrofolate + H(+). Its function is as follows. Attaches a formyl group to the free amino group of methionyl-tRNA(fMet). The formyl group appears to play a dual role in the initiator identity of N-formylmethionyl-tRNA by promoting its recognition by IF2 and preventing the misappropriation of this tRNA by the elongation apparatus. This Helicobacter acinonychis (strain Sheeba) protein is Methionyl-tRNA formyltransferase.